Reading from the N-terminus, the 170-residue chain is Adenine phosphoribosyltransferase (170 aa).

Belongs to the purine/pyrimidine phosphoribosyltransferase family. As to quaternary structure, homodimer.

It localises to the cytoplasm. The enzyme catalyses AMP + diphosphate = 5-phospho-alpha-D-ribose 1-diphosphate + adenine. Its pathway is purine metabolism; AMP biosynthesis via salvage pathway; AMP from adenine: step 1/1. Functionally, catalyzes a salvage reaction resulting in the formation of AMP, that is energically less costly than de novo synthesis. This chain is Adenine phosphoribosyltransferase, found in Prochlorococcus marinus (strain AS9601).